Consider the following 232-residue polypeptide: Ribonuclease P protein component 3 (232 aa).

It belongs to the eukaryotic/archaeal RNase P protein component 3 family. Consists of a catalytic RNA component and at least 4-5 protein subunits.

Its subcellular location is the cytoplasm. The catalysed reaction is Endonucleolytic cleavage of RNA, removing 5'-extranucleotides from tRNA precursor.. In terms of biological role, part of ribonuclease P, a protein complex that generates mature tRNA molecules by cleaving their 5'-ends. This chain is Ribonuclease P protein component 3, found in Methanococcus maripaludis (strain C7 / ATCC BAA-1331).